An 857-amino-acid chain; its full sequence is Leucine--tRNA ligase (857 aa).

Residues Pro-42–His-52 carry the 'HIGH' region motif. Residues Lys-617–Ser-621 carry the 'KMSKS' region motif. Lys-620 is an ATP binding site.

The protein belongs to the class-I aminoacyl-tRNA synthetase family.

The protein resides in the cytoplasm. It carries out the reaction tRNA(Leu) + L-leucine + ATP = L-leucyl-tRNA(Leu) + AMP + diphosphate. In Vibrio parahaemolyticus serotype O3:K6 (strain RIMD 2210633), this protein is Leucine--tRNA ligase.